The sequence spans 497 residues: Cysteine--tRNA ligase (497 aa).

Residue Cys-46 coordinates Zn(2+). Positions Pro-48–His-58 match the 'HIGH' region motif. Zn(2+) contacts are provided by Cys-237, His-262, and Glu-266. Residues Lys-293–Ser-297 carry the 'KMSKS' region motif. Lys-296 lines the ATP pocket.

This sequence belongs to the class-I aminoacyl-tRNA synthetase family. As to quaternary structure, monomer. Requires Zn(2+) as cofactor.

The protein localises to the cytoplasm. The enzyme catalyses tRNA(Cys) + L-cysteine + ATP = L-cysteinyl-tRNA(Cys) + AMP + diphosphate. The protein is Cysteine--tRNA ligase of Deinococcus geothermalis (strain DSM 11300 / CIP 105573 / AG-3a).